The sequence spans 417 residues: Serine--tRNA ligase (417 aa).

232-234 (TAE) is a binding site for L-serine. Residues 263–265 (RRE) and valine 279 each bind ATP. Glutamate 286 lines the L-serine pocket. 350 to 353 (EISS) is an ATP binding site. Serine 385 is a binding site for L-serine.

Belongs to the class-II aminoacyl-tRNA synthetase family. Type-1 seryl-tRNA synthetase subfamily. As to quaternary structure, homodimer. The tRNA molecule binds across the dimer.

It is found in the cytoplasm. It carries out the reaction tRNA(Ser) + L-serine + ATP = L-seryl-tRNA(Ser) + AMP + diphosphate + H(+). It catalyses the reaction tRNA(Sec) + L-serine + ATP = L-seryl-tRNA(Sec) + AMP + diphosphate + H(+). Its pathway is aminoacyl-tRNA biosynthesis; selenocysteinyl-tRNA(Sec) biosynthesis; L-seryl-tRNA(Sec) from L-serine and tRNA(Sec): step 1/1. Functionally, catalyzes the attachment of serine to tRNA(Ser). Is also able to aminoacylate tRNA(Sec) with serine, to form the misacylated tRNA L-seryl-tRNA(Sec), which will be further converted into selenocysteinyl-tRNA(Sec). The chain is Serine--tRNA ligase from Leptospira borgpetersenii serovar Hardjo-bovis (strain JB197).